A 245-amino-acid polypeptide reads, in one-letter code: Orotidine 5'-phosphate decarboxylase (245 aa).

Substrate-binding positions include D22, K44, 71–80, T131, R192, Q201, G221, and R222; that span reads DLKFHDIPNT. The Proton donor role is filled by K73.

Belongs to the OMP decarboxylase family. Type 1 subfamily. Homodimer.

It carries out the reaction orotidine 5'-phosphate + H(+) = UMP + CO2. Its pathway is pyrimidine metabolism; UMP biosynthesis via de novo pathway; UMP from orotate: step 2/2. Its function is as follows. Catalyzes the decarboxylation of orotidine 5'-monophosphate (OMP) to uridine 5'-monophosphate (UMP). In Escherichia fergusonii (strain ATCC 35469 / DSM 13698 / CCUG 18766 / IAM 14443 / JCM 21226 / LMG 7866 / NBRC 102419 / NCTC 12128 / CDC 0568-73), this protein is Orotidine 5'-phosphate decarboxylase.